We begin with the raw amino-acid sequence, 236 residues long: 2-C-methyl-D-erythritol 4-phosphate cytidylyltransferase (236 aa).

This sequence belongs to the IspD/TarI cytidylyltransferase family. IspD subfamily. In terms of assembly, homodimer.

It carries out the reaction 2-C-methyl-D-erythritol 4-phosphate + CTP + H(+) = 4-CDP-2-C-methyl-D-erythritol + diphosphate. It functions in the pathway isoprenoid biosynthesis; isopentenyl diphosphate biosynthesis via DXP pathway; isopentenyl diphosphate from 1-deoxy-D-xylulose 5-phosphate: step 2/6. Catalyzes the formation of 4-diphosphocytidyl-2-C-methyl-D-erythritol from CTP and 2-C-methyl-D-erythritol 4-phosphate (MEP). This chain is 2-C-methyl-D-erythritol 4-phosphate cytidylyltransferase, found in Escherichia coli O157:H7.